The following is a 225-amino-acid chain: Claudin-8 (225 aa).

Residues 1 to 7 (MATYALQ) are Cytoplasmic-facing. A helical transmembrane segment spans residues 8–28 (MAALVLGGVGMVGTVAVTIMP). The Extracellular segment spans residues 29-81 (QWRVSAFIESNIVVFENRWEGLWMNCMRHANIRMQCKVYDSLLALSPDLQASR). Residues 82–102 (GLMCAASVLAFLAFMTAILGM) traverse the membrane as a helical segment. The Cytoplasmic portion of the chain corresponds to 103–117 (KCTRCTGDDENVKSR). A helical membrane pass occupies residues 118–138 (ILLTAGIIFFITGLVVLIPVS). Over 139–166 (WVANSIIRDFYNPLVDVALKRELGEALY) the chain is Extracellular. Residues 167-187 (IGWTTALVLIAGGALFCCVFC) form a helical membrane-spanning segment. Topologically, residues 188–225 (CTERSNSYRYSVPSHRTTQRSFHAEKRSPSIYSKSQYV) are cytoplasmic. Residue lysine 213 forms a Glycyl lysine isopeptide (Lys-Gly) (interchain with G-Cter in ubiquitin) linkage. An interactions with TJP1, TJP2 and TJP3 region spans residues 224 to 225 (YV).

This sequence belongs to the claudin family. As to quaternary structure, can form heteropolymeric strands with other claudins. Interacts with CLDN4. Directly interacts with TJP1/ZO-1, TJP2/ZO-2 and TJP3/ZO-3. Interacts with KLHL3. Ubiquitinated by the BCR(KLHL3) E3 ubiquitin ligase complex in the kidney, leading to its degradation. As to expression, expressed primarily in lung and kidney. Present in both cortical and medullar collecting ducts (at protein level).

Its subcellular location is the cell junction. It localises to the tight junction. The protein localises to the cell membrane. It carries out the reaction chloride(in) = chloride(out). The enzyme catalyses bromide(in) = bromide(out). The catalysed reaction is iodide(out) = iodide(in). It catalyses the reaction fluoride(in) = fluoride(out). Can associate with other claudins to regulate tight junction structural and functional strand dynamics. May coassemble with CLDN4 into tight junction strands containing anion-selective channels that convey paracellular chloride permeability in renal collecting ducts. Cannot form tight junction strands on its own. The polypeptide is Claudin-8 (Mus musculus (Mouse)).